Consider the following 154-residue polypeptide: NAD(P)H-quinone oxidoreductase subunit N (154 aa).

It belongs to the complex I NdhN subunit family. NDH-1 can be composed of about 15 different subunits; different subcomplexes with different compositions have been identified which probably have different functions.

The protein resides in the cellular thylakoid membrane. The enzyme catalyses a plastoquinone + NADH + (n+1) H(+)(in) = a plastoquinol + NAD(+) + n H(+)(out). It catalyses the reaction a plastoquinone + NADPH + (n+1) H(+)(in) = a plastoquinol + NADP(+) + n H(+)(out). NDH-1 shuttles electrons from an unknown electron donor, via FMN and iron-sulfur (Fe-S) centers, to quinones in the respiratory and/or the photosynthetic chain. The immediate electron acceptor for the enzyme in this species is believed to be plastoquinone. Couples the redox reaction to proton translocation, and thus conserves the redox energy in a proton gradient. Cyanobacterial NDH-1 also plays a role in inorganic carbon-concentration. The sequence is that of NAD(P)H-quinone oxidoreductase subunit N from Prochlorococcus marinus (strain NATL2A).